Here is a 309-residue protein sequence, read N- to C-terminus: D-alanine--D-alanine ligase (309 aa).

An ATP-grasp domain is found at 109–304 (KMVWAACGLP…FTALCLAILE (196 aa)). 135 to 190 (VAELGLPIFVKPVHEGSSMGATKVTAASQLKAAWERAARFDDLVLAEEFIVGAELT) provides a ligand contact to ATP. 3 residues coordinate Mg(2+): Asp258, Glu271, and Asn273.

This sequence belongs to the D-alanine--D-alanine ligase family. The cofactor is Mg(2+). Requires Mn(2+) as cofactor.

The protein resides in the cytoplasm. It catalyses the reaction 2 D-alanine + ATP = D-alanyl-D-alanine + ADP + phosphate + H(+). Its pathway is cell wall biogenesis; peptidoglycan biosynthesis. Cell wall formation. This is D-alanine--D-alanine ligase from Aromatoleum aromaticum (strain DSM 19018 / LMG 30748 / EbN1) (Azoarcus sp. (strain EbN1)).